The following is a 424-amino-acid chain: Histidine--tRNA ligase (424 aa).

The protein belongs to the class-II aminoacyl-tRNA synthetase family. In terms of assembly, homodimer.

Its subcellular location is the cytoplasm. It catalyses the reaction tRNA(His) + L-histidine + ATP = L-histidyl-tRNA(His) + AMP + diphosphate + H(+). This chain is Histidine--tRNA ligase, found in Shewanella sediminis (strain HAW-EB3).